A 187-amino-acid polypeptide reads, in one-letter code: Cell division protein SepF (187 aa).

The disordered stretch occupies residues 13-74; the sequence is GLAEDDRYAE…PAPATTAQVT (62 aa). A compositionally biased stretch (basic and acidic residues) spans 16–65; sequence EDDRYAEDTEPETTRPRVEAAREVRVESRHEARPEVRHEPRPEVSVERRP.

This sequence belongs to the SepF family. Homodimer. Interacts with FtsZ.

The protein localises to the cytoplasm. In terms of biological role, cell division protein that is part of the divisome complex and is recruited early to the Z-ring. Probably stimulates Z-ring formation, perhaps through the cross-linking of FtsZ protofilaments. Its function overlaps with FtsA. The sequence is that of Cell division protein SepF from Kineococcus radiotolerans (strain ATCC BAA-149 / DSM 14245 / SRS30216).